The chain runs to 315 residues: Methionyl-tRNA formyltransferase (315 aa).

107–110 (SLLP) contacts (6S)-5,6,7,8-tetrahydrofolate.

This sequence belongs to the Fmt family.

The enzyme catalyses L-methionyl-tRNA(fMet) + (6R)-10-formyltetrahydrofolate = N-formyl-L-methionyl-tRNA(fMet) + (6S)-5,6,7,8-tetrahydrofolate + H(+). In terms of biological role, attaches a formyl group to the free amino group of methionyl-tRNA(fMet). The formyl group appears to play a dual role in the initiator identity of N-formylmethionyl-tRNA by promoting its recognition by IF2 and preventing the misappropriation of this tRNA by the elongation apparatus. In Borreliella afzelii (strain PKo) (Borrelia afzelii), this protein is Methionyl-tRNA formyltransferase.